The chain runs to 3587 residues: Surfactin synthase subunit 1 (3587 aa).

3 consecutive Carrier domains span residues 971 to 1046 (APRN…DHRE), 2010 to 2085 (APRN…ASAE), and 3038 to 3112 (APTT…ERAE). An O-(pantetheine 4'-phosphoryl)serine mark is found at Ser1006, Ser2045, and Ser3073.

This sequence belongs to the ATP-dependent AMP-binding enzyme family. Requires pantetheine 4'-phosphate as cofactor.

It participates in antibiotic biosynthesis; surfactin biosynthesis. Its function is as follows. This protein is a multifunctional enzyme able to activate and polymerize the amino acids Leu, Glu, Asp and Val. Activation sites for these AA consist of individual domains. The chain is Surfactin synthase subunit 1 (srfAA) from Bacillus subtilis (strain 168).